The chain runs to 338 residues: tRNA N6-adenosine threonylcarbamoyltransferase (338 aa).

2 residues coordinate Fe cation: H110 and H114. Residues 132–136 (LLSGG), D165, G178, and N274 each bind substrate. Residue D298 participates in Fe cation binding.

The protein belongs to the KAE1 / TsaD family. Fe(2+) serves as cofactor.

It localises to the cytoplasm. The catalysed reaction is L-threonylcarbamoyladenylate + adenosine(37) in tRNA = N(6)-L-threonylcarbamoyladenosine(37) in tRNA + AMP + H(+). Required for the formation of a threonylcarbamoyl group on adenosine at position 37 (t(6)A37) in tRNAs that read codons beginning with adenine. Is involved in the transfer of the threonylcarbamoyl moiety of threonylcarbamoyl-AMP (TC-AMP) to the N6 group of A37, together with TsaE and TsaB. TsaD likely plays a direct catalytic role in this reaction. The protein is tRNA N6-adenosine threonylcarbamoyltransferase of Borrelia garinii subsp. bavariensis (strain ATCC BAA-2496 / DSM 23469 / PBi) (Borreliella bavariensis).